The primary structure comprises 266 residues: 3-methyl-2-oxobutanoate hydroxymethyltransferase (266 aa).

Mg(2+) is bound by residues aspartate 45 and aspartate 84. 3-methyl-2-oxobutanoate contacts are provided by residues 45–46 (DS), aspartate 84, and lysine 112. Glutamate 114 is a Mg(2+) binding site. Catalysis depends on glutamate 181, which acts as the Proton acceptor.

It belongs to the PanB family. As to quaternary structure, homodecamer; pentamer of dimers. The cofactor is Mg(2+).

The protein resides in the cytoplasm. It catalyses the reaction 3-methyl-2-oxobutanoate + (6R)-5,10-methylene-5,6,7,8-tetrahydrofolate + H2O = 2-dehydropantoate + (6S)-5,6,7,8-tetrahydrofolate. It functions in the pathway cofactor biosynthesis; (R)-pantothenate biosynthesis; (R)-pantoate from 3-methyl-2-oxobutanoate: step 1/2. Catalyzes the reversible reaction in which hydroxymethyl group from 5,10-methylenetetrahydrofolate is transferred onto alpha-ketoisovalerate to form ketopantoate. This chain is 3-methyl-2-oxobutanoate hydroxymethyltransferase, found in Pseudomonas fluorescens (strain Pf0-1).